The sequence spans 340 residues: Protein AC11 (340 aa).

Functionally, plays an essential role in nucleocapsid egress from the host nucleus to form the budded virion (BV). Does not participate in nucleocapsid formation. This is Protein AC11 from Autographa californica nuclear polyhedrosis virus (AcMNPV).